A 1433-amino-acid polypeptide reads, in one-letter code: DNA-directed RNA polymerase subunit beta' (1433 aa).

4 residues coordinate Zn(2+): Cys66, Cys68, Cys81, and Cys84. The Mg(2+) site is built by Asp473, Asp475, and Asp477. Cys815, Cys889, Cys896, and Cys899 together coordinate Zn(2+).

The protein belongs to the RNA polymerase beta' chain family. The RNAP catalytic core consists of 2 alpha, 1 beta, 1 beta' and 1 omega subunit. When a sigma factor is associated with the core the holoenzyme is formed, which can initiate transcription. Requires Mg(2+) as cofactor. The cofactor is Zn(2+).

The enzyme catalyses RNA(n) + a ribonucleoside 5'-triphosphate = RNA(n+1) + diphosphate. In terms of biological role, DNA-dependent RNA polymerase catalyzes the transcription of DNA into RNA using the four ribonucleoside triphosphates as substrates. This is DNA-directed RNA polymerase subunit beta' from Porphyromonas gingivalis (strain ATCC BAA-308 / W83).